We begin with the raw amino-acid sequence, 401 residues long: Chorismate synthase (401 aa).

2 residues coordinate NADP(+): Arg-40 and Arg-46. FMN is bound by residues 135-137 (RAS), 256-257 (QA), Gly-300, 315-319 (KPIST), and Arg-341.

It belongs to the chorismate synthase family. Homotetramer. Requires FMNH2 as cofactor.

It carries out the reaction 5-O-(1-carboxyvinyl)-3-phosphoshikimate = chorismate + phosphate. It participates in metabolic intermediate biosynthesis; chorismate biosynthesis; chorismate from D-erythrose 4-phosphate and phosphoenolpyruvate: step 7/7. In terms of biological role, catalyzes the anti-1,4-elimination of the C-3 phosphate and the C-6 proR hydrogen from 5-enolpyruvylshikimate-3-phosphate (EPSP) to yield chorismate, which is the branch point compound that serves as the starting substrate for the three terminal pathways of aromatic amino acid biosynthesis. This reaction introduces a second double bond into the aromatic ring system. The chain is Chorismate synthase from Mycobacterium bovis (strain BCG / Pasteur 1173P2).